We begin with the raw amino-acid sequence, 1005 residues long: Myosin IE heavy chain (1005 aa).

The Myosin motor domain occupies 8-693; sequence EGVPDFVLLN…TLFYFEEKRE (686 aa). An ATP-binding site is contributed by 101 to 108; that stretch reads GESGAGKT. The segment at 539–562 is disordered; that stretch reads SDPLVQGLFPPTRPEDSKKRPETA. A compositionally biased stretch (basic and acidic residues) spans 551-560; it reads RPEDSKKRPE. Residues 556–630 are actin-binding; sequence KKRPETAGSQ…RAGFAGRIEY (75 aa). IQ domains follow at residues 694–722 and 716–745; these read LEMPRIVTLIQKTWRGYRARSKWNQRKAA and WNQRKAAIKIQLFYRSYRYKKWFRELHRAF. Residues 810–1004 form the TH1 domain; that stretch reads KKKWDFRRHF…KGNQATIQFK (195 aa).

This sequence belongs to the TRAFAC class myosin-kinesin ATPase superfamily. Myosin family. In terms of assembly, myosin I heavy chain is single-headed. Dimer of a heavy and a light chain. Inability to self-assemble into filaments.

Myosin is a protein that binds to actin and has ATPase activity that is activated by actin. May play a role in moving membranes relative to actin. This chain is Myosin IE heavy chain (myoE), found in Dictyostelium discoideum (Social amoeba).